Here is a 354-residue protein sequence, read N- to C-terminus: Divinyl chlorophyll a/b light-harvesting protein PcbG (354 aa).

6 helical membrane-spanning segments follow: residues 27–47 (FIAAHAGHTGLISFAAGASTL), 65–85 (IFLAHLASIGIGFDDAGVWTG), 88–108 (VASVAIVHIIASLVYAGGALS), 201–221 (VLGGHAFLAFVEITGGAFHIA), 241–261 (AVLSFSLAGIGWMAIVAAFWC), and 308–328 (LTNVHYYFGFFFLQGHLWHAI).

Belongs to the PsbB/PsbC family. IsiA/Pcb subfamily. The antenna complex consists of divinyl chlorophylls (a and b) and divinyl chlorophyll a/b binding proteins and binds more divinyl chlorophyll b than does the antenna complex from high-light-adapted Prochlorococcus. Divinyl chlorophyll a is required as a cofactor. It depends on divinyl chlorophyll b as a cofactor.

Its subcellular location is the cellular thylakoid membrane. The antenna complex functions as a light receptor, it captures and delivers excitation energy to photosystems II and I. The Prochlorales pcb genes are not related to higher plant LHCs. This Prochlorococcus marinus (strain NATL2A) protein is Divinyl chlorophyll a/b light-harvesting protein PcbG (pcbG).